The chain runs to 398 residues: MGTQKEKKSVFALLKSNSIGGILLMLATALALIMANSPGHYLYSMLITTPVEVRFGPLEIAKPLLLWINDGLMAGFFFLVGLELKREIFEGGLSQRSNIILPAIGALGGMVVPSCIYLAFNYQDPVALRGWAIPAATDIAFALGILSLLGSRVPTSLKILLTTLAIFDDIGAILIIACFYTNDIYLPGLLIALLCMLILFIVNRCKVERTTVYIFIGSIMWIAMLKSGVHATLAGVILAMFIPMYSRKHPGQSPLKNLEHDLQGTATFIILPIFAFANSGINLTNISMDFFTHAVPMGIALGLFIGKPLGIISFLWVGVQLRLTKLPVDLNWSTVTGMSALAGIGFTMSLFVGSLAFDQAITGLIFDERLGIIMGSLFSGLLGYLLLNKTLPGDKHEM.

Transmembrane regions (helical) follow at residues 19-39 (IGGILLMLATALALIMANSPG), 64-84 (LLLWINDGLMAGFFFLVGLEL), 99-119 (IILPAIGALGGMVVPSCIYLA), 130-150 (GWAIPAATDIAFALGILSLLG), 159-179 (ILLTTLAIFDDIGAILIIACF), 182-202 (NDIYLPGLLIALLCMLILFIV), 222-242 (IAMLKSGVHATLAGVILAMFI), 266-286 (ATFIILPIFAFANSGINLTNI), 299-319 (IALGLFIGKPLGIISFLWVGV), 337-357 (GMSALAGIGFTMSLFVGSLAF), and 370-390 (LGIIMGSLFSGLLGYLLLNKT).

This sequence belongs to the NhaA Na(+)/H(+) (TC 2.A.33) antiporter family.

It localises to the cell inner membrane. The enzyme catalyses Na(+)(in) + 2 H(+)(out) = Na(+)(out) + 2 H(+)(in). Its function is as follows. Na(+)/H(+) antiporter that extrudes sodium in exchange for external protons. In Desulfotalea psychrophila (strain LSv54 / DSM 12343), this protein is Na(+)/H(+) antiporter NhaA.